Here is a 324-residue protein sequence, read N- to C-terminus: Cyclin-dependent kinase C-3 (324 aa).

The Protein kinase domain occupies 27–320 (FRRIRKIGEG…AHDALCAAYF (294 aa)). ATP-binding positions include 33–41 (IGEGTYGEV) and Lys-56. Thr-37 carries the post-translational modification Phosphothreonine. Residue Tyr-38 is modified to Phosphotyrosine. The active-site Proton acceptor is the Asp-160. At Thr-193 the chain carries Phosphothreonine.

It belongs to the protein kinase superfamily. CMGC Ser/Thr protein kinase family. CDC2/CDKX subfamily.

It carries out the reaction L-seryl-[protein] + ATP = O-phospho-L-seryl-[protein] + ADP + H(+). The enzyme catalyses L-threonyl-[protein] + ATP = O-phospho-L-threonyl-[protein] + ADP + H(+). It catalyses the reaction [DNA-directed RNA polymerase] + ATP = phospho-[DNA-directed RNA polymerase] + ADP + H(+). The sequence is that of Cyclin-dependent kinase C-3 (CDKC-1) from Oryza sativa subsp. japonica (Rice).